The sequence spans 439 residues: Mitochondrial distribution and morphology protein 10 (439 aa).

The disordered stretch occupies residues 275–305 (LPDATPPSFQVPSSSSSSSNPVSPSTSQPPT). Positions 280–305 (PPSFQVPSSSSSSSNPVSPSTSQPPT) are enriched in low complexity.

This sequence belongs to the MDM10 family. As to quaternary structure, component of the ER-mitochondria encounter structure (ERMES) or MDM complex, composed of MMM1, MDM10, MDM12 and MDM34. Associates with the mitochondrial outer membrane sorting assembly machinery SAM(core) complex.

The protein localises to the mitochondrion outer membrane. Component of the ERMES/MDM complex, which serves as a molecular tether to connect the endoplasmic reticulum and mitochondria. Components of this complex are involved in the control of mitochondrial shape and protein biogenesis and may function in phospholipid exchange. MDM10 is involved in the late assembly steps of the general translocase of the mitochondrial outer membrane (TOM complex). Functions in the TOM40-specific route of the assembly of outer membrane beta-barrel proteins, including the association of TOM40 with the receptor TOM22 and small TOM proteins. Can associate with the SAM(core) complex as well as the MDM12-MMM1 complex, both involved in late steps of the major beta-barrel assembly pathway, that is responsible for biogenesis of all outer membrane beta-barrel proteins. May act as a switch that shuttles between both complexes and channels precursor proteins into the TOM40-specific pathway. Plays a role in mitochondrial morphology and in the inheritance of mitochondria. The polypeptide is Mitochondrial distribution and morphology protein 10 (Laccaria bicolor (strain S238N-H82 / ATCC MYA-4686) (Bicoloured deceiver)).